We begin with the raw amino-acid sequence, 256 residues long: uncharacterized protein (256 aa).

The tract at residues 211 to 256 (RKLQASVTTTPPKRCKLADRPAQTTQDTPRAPQPAPVRAQRPLFTL) is disordered. The span at 246 to 256 (PVRAQRPLFTL) shows a compositional bias: low complexity.

This is an uncharacterized protein from Orgyia pseudotsugata (Douglas-fir tussock moth).